Consider the following 212-residue polypeptide: EFC-associated protein OPG053 (212 aa).

Residues 1–175 (MAETKEFKTL…IIENRLPYYD (175 aa)) lie on the Virion surface side of the membrane. 3 cysteine pairs are disulfide-bonded: C33-C55, C47-C127, and C107-C149. The helical transmembrane segment at 176 to 196 (PWFLVGVAIILVIFTVAICSI) threads the bilayer. The Intravirion segment spans residues 197–212 (RRNLALKYRYGTFLYV).

The protein belongs to the orthopoxvirus OPG053 family. As to quaternary structure, component of the entry fusion complex (EFC) composed of OPG053, OPG076, OPG086, OPG094, OPG095, OPG099, OPG107, OPG143, OPG104, OPG147 and OPG155. Except for OPG095 and OPG052, each of the EFC proteins is required for assembly or stability of the complex. Disulfid bonds are oxidized in the cytoplasm by OPG088 protein. Post-translationally, unglycosylated because produced in viral factories instead of the classic ER -Golgi route.

It localises to the virion membrane. Component of the entry fusion complex (EFC), which consists of 11 proteins. During cell infection, this complex mediates entry of the virion core into the host cytoplasm by a two-step mechanism consisting of lipid mixing of the viral and cellular membranes and subsequent pore formation. The polypeptide is EFC-associated protein OPG053 (OPG053) (Monkeypox virus).